Reading from the N-terminus, the 710-residue chain is Solute carrier family 15 member 1 (710 aa).

Residues 1–21 traverse the membrane as a helical segment; that stretch reads MGMSKSRGCFGYPLSIFFIVV. The Extracellular portion of the chain corresponds to 22–53; that stretch reads NEFCERFSYYGMRALLVLYFRNFLGWDDDLST. Residues 54–74 form a helical membrane-spanning segment; it reads AIYHTFVALCYLTPILGALIA. The Cytoplasmic portion of the chain corresponds to 75–82; that stretch reads DSWLGKFK. A helical membrane pass occupies residues 83–103; the sequence is TIVSLSIVYTIGQAVISVSSI. Over 104-118 the chain is Extracellular; it reads NDLTDHDHDGSPNNL. Residues 119–139 traverse the membrane as a helical segment; it reads PLHVALSMIGLALIALGTGGI. The Cytoplasmic portion of the chain corresponds to 140-161; it reads KPCVSAFGGDQFEEGQEKQRNR. A helical membrane pass occupies residues 162–182; it reads FFSIFYLAINAGSLLSTIITP. The Extracellular segment spans residues 183 to 198; sequence ILRVQQCGIHSQQACY. A helical membrane pass occupies residues 199 to 219; it reads PLAFGVPAALMAVALIVFVLG. The Cytoplasmic portion of the chain corresponds to 220–276; that stretch reads SGMYKKFQPQGNIMGKVAKCIRFAIKNRFRHRSKAFPKRNHWLDWAKEKYDERLISQ. Residues 277–297 traverse the membrane as a helical segment; that stretch reads IKIMTKVMFLYIPLPMFWALF. At 298-327 the chain is on the extracellular side; that stretch reads DQQGSRWTLQATTMTGKIGTIEIQPDQMQT. Residues 328-348 traverse the membrane as a helical segment; sequence VNAILIVIMVPIVDAVVYPLI. Topologically, residues 349–361 are cytoplasmic; sequence AKCGFNFTSLKKM. The chain crosses the membrane as a helical span at residues 362-382; that stretch reads TVGMFLASMAFVVAAIVQVEI. Topologically, residues 383-586 are extracellular; it reads DKTLPVFPSG…PPNTVNMALQ (204 aa). The interval 383–586 is extracellular domain (ECD); that stretch reads DKTLPVFPSG…PPNTVNMALQ (204 aa). Asn-415, Asn-439, Asn-510, Asn-532, and Asn-539 each carry an N-linked (GlcNAc...) asparagine glycan. The chain crosses the membrane as a helical span at residues 587 to 607; it reads IPQYFLLTCGEVVFSVTGLEF. Over 608–621 the chain is Cytoplasmic; sequence SYSQAPSNMKSVLQ. The chain crosses the membrane as a helical span at residues 622–642; sequence AGWLLTVAIGNIIVLIVAEAG. Residues 643 to 647 lie on the Extracellular side of the membrane; it reads HFDKQ. Residues 648-668 form a helical membrane-spanning segment; the sequence is WAEYVLFASLLLVVCIIFAIM. Residues 669 to 710 are Cytoplasmic-facing; it reads ARFYTYINPAEIEAQFDEDEKKKGVGKENPYSSLEPVSQTNM. Residues 687–710 form a disordered region; the sequence is DEKKKGVGKENPYSSLEPVSQTNM. Positions 698–710 are enriched in polar residues; the sequence is PYSSLEPVSQTNM.

This sequence belongs to the major facilitator superfamily. Proton-dependent oligopeptide transporter (POT/PTR) (TC 2.A.17) family. In terms of assembly, interacts (via extracellular domain region) with trypsin. As to expression, highly expressed in small intestine. Expression is restricted to pinealocytes.

It localises to the apical cell membrane. It carries out the reaction a dipeptide(out) + H(+)(out) = a dipeptide(in) + H(+)(in). The enzyme catalyses an L-amino acid tripeptide(out) + H(+)(out) = an L-amino acid tripeptide(in) + H(+)(in). It catalyses the reaction L-alanyl-L-lysine(out) + H(+)(out) = L-alanyl-L-lysine(in) + H(+)(in). The catalysed reaction is L-alanyl-L-proline(out) + H(+)(out) = L-alanyl-L-proline(in) + H(+)(in). It carries out the reaction L-alanyl-L-valine(out) + H(+)(out) = L-alanyl-L-valine(in) + H(+)(in). The enzyme catalyses carnosine(out) + H(+)(out) = carnosine(in) + H(+)(in). It catalyses the reaction glycyl-L-glutamine(out) + H(+)(out) = glycyl-L-glutamine(in) + H(+)(in). The catalysed reaction is glycyl-L-leucine(out) + H(+)(out) = glycyl-L-leucine(in) + H(+)(in). It carries out the reaction glycyl-L-proline(out) + H(+)(out) = glycyl-L-proline(in) + H(+)(in). The enzyme catalyses glycyl-sarcosine(out) + H(+)(out) = glycyl-sarcosine(in) + H(+)(in). It catalyses the reaction L-leucyl-L-leucine(out) + H(+)(out) = L-leucyl-L-leucine(in) + H(+)(in). The catalysed reaction is L-leucyl-L-proline(out) + H(+)(out) = L-leucyl-L-proline(in) + H(+)(in). It carries out the reaction L-phenylalanyl-L-leucine(out) + H(+)(out) = L-phenylalanyl-L-leucine(in) + H(+)(in). The enzyme catalyses L-phenylalanyl-L-phenylalanine(out) + H(+)(out) = L-phenylalanyl-L-phenylalanine(in) + H(+)(in). It catalyses the reaction L-lysyl-glycine(out) + H(+)(out) = L-lysyl-glycine(in) + H(+)(in). The catalysed reaction is L-tyrosylglycine(out) + H(+)(out) = L-tyrosylglycine(in) + H(+)(in). It carries out the reaction L-alanyl-L-aspartate(out) + 2 H(+)(out) = L-alanyl-L-aspartate(in) + 2 H(+)(in). The enzyme catalyses L-aspartyl-glycine(out) + 2 H(+)(out) = L-aspartyl-glycine(in) + 2 H(+)(in). It catalyses the reaction glycyl-L-aspartate(out) + 2 H(+)(out) = glycyl-L-aspartate(in) + 2 H(+)(in). The catalysed reaction is glycyl-L-glutamate(out) + 2 H(+)(out) = glycyl-L-glutamate(in) + 2 H(+)(in). It carries out the reaction L-alanyl-L-leucyl-L-alanine(out) + H(+)(out) = L-alanyl-L-leucyl-L-alanine(in) + H(+)(in). The enzyme catalyses L-alanyl-L-prolylglycine(out) + H(+)(out) = L-alanyl-L-prolylglycine(in) + H(+)(in). It catalyses the reaction glycylglycyl-L-isoleucine(out) + H(+)(out) = glycylglycyl-L-isoleucine(in) + H(+)(in). The catalysed reaction is glycylglycyl-L-proline(out) + H(+)(out) = glycylglycyl-L-proline(in) + H(+)(in). It carries out the reaction L-methionyl-L-phenylalanyl-L-methionine(out) + H(+)(out) = L-methionyl-L-phenylalanyl-L-methionine(in) + H(+)(in). The enzyme catalyses N-acetyl-D-muramoyl-L-alanyl-D-isoglutamine(out) + 2 H(+)(out) = N-acetyl-D-muramoyl-L-alanyl-D-isoglutamine(in) + 2 H(+)(in). It catalyses the reaction N(alpha)-formyl-L-methionyl-L-leucyl-L-phenylalanine(out) + 2 H(+)(out) = N(alpha)-formyl-L-methionyl-L-leucyl-L-phenylalanine(in) + 2 H(+)(in). Its function is as follows. Electrogenic proton-coupled amino-acid transporter that transports oligopeptides of 2 to 4 amino acids with a preference for dipeptides. Transports neutral and monovalently charged peptides with a proton to peptide stoichiometry of 1:1 or 2:1. Primarily responsible for the absorption of dietary di- and tripeptides from the small intestinal lumen. Mediates transepithelial transport of muramyl and N-formylated bacterial dipeptides contributing to recognition of pathogenic bacteria by the mucosal immune system. This is Solute carrier family 15 member 1 (Slc15a1) from Rattus norvegicus (Rat).